Here is a 69-residue protein sequence, read N- to C-terminus: Large ribosomal subunit protein bL31 (69 aa).

Residues C16, C18, C38, and C41 each contribute to the Zn(2+) site.

It belongs to the bacterial ribosomal protein bL31 family. Type A subfamily. In terms of assembly, part of the 50S ribosomal subunit. The cofactor is Zn(2+).

In terms of biological role, binds the 23S rRNA. This is Large ribosomal subunit protein bL31 from Thermobifida fusca (strain YX).